The primary structure comprises 1035 residues: GRB10-interacting GYF protein 1 (1035 aa).

Ser24, Ser28, Ser137, and Ser157 each carry phosphoserine. A disordered region spans residues 105-422; that stretch reads KGAGPPLAGT…AGPPGDLEDD (318 aa). 2 stretches are compositionally biased toward basic and acidic residues: residues 148–179 and 186–203; these read SPRE…RCGF and PRKE…SLRE. The residue at position 230 (Ser230) is a Phosphoserine. Residues 239-267 show a composition bias toward basic and acidic residues; sequence GWREHGERRRKFEFDLRGDRGGCGEEEGR. 2 stretches are compositionally biased toward acidic residues: residues 295–304 and 324–349; these read CLDDEDEEMG and PEEQ…EEGP. Ser341 is subject to Phosphoserine. A compositionally biased stretch (low complexity) spans 367 to 378; the sequence is SSPSPLPTLGPL. The span at 388-401 shows a compositional bias: basic and acidic residues; the sequence is TAEKEPPAAEDDIR. Phosphoserine is present on Ser406. Over residues 406–417 the composition is skewed to low complexity; it reads SPGVGSSAGPPG. Positions 474–522 constitute a GYF domain; it reads ARKWFYKDPQGEIQGPFTTQEMAEWFQAGYFSMSLLVKRGCDEGFQPLG. A phosphoserine mark is found at Ser538 and Ser638. 3 disordered regions span residues 621–640, 696–724, and 825–879; these read PPRG…LSVP, KREE…QEEE, and WGGP…RPIR. Polar residues predominate over residues 629–639; it reads LLPTMSRSLSV. The segment covering 696-722 has biased composition (basic and acidic residues); sequence KREEEERKRREEKRRQQQQEEQKRRQE. Residues 857–874 show a composition bias toward low complexity; that stretch reads LKNSRSSPSLSDSYSHLS. A Phosphoserine modification is found at Ser862.

The protein belongs to the GIGYF family. In terms of assembly, interacts with GRB10. This transient binding is increased under IGF1 stimulation and leads to recruitment of GIGYF1/GRB10 complex to IGF1 receptor. Interacts with DDX6.

In terms of biological role, may act cooperatively with GRB10 to regulate tyrosine kinase receptor signaling. May increase IGF1 receptor phosphorylation under IGF1 stimulation as well as phosphorylation of IRS1 and SHC1. In Homo sapiens (Human), this protein is GRB10-interacting GYF protein 1 (GIGYF1).